Here is a 125-residue protein sequence, read N- to C-terminus: Small ribosomal subunit protein uS13 (125 aa).

The tract at residues arginine 93–arginine 125 is disordered. The span at glutamine 101 to arginine 125 shows a compositional bias: basic residues.

The protein belongs to the universal ribosomal protein uS13 family. As to quaternary structure, part of the 30S ribosomal subunit. Forms a loose heterodimer with protein S19. Forms two bridges to the 50S subunit in the 70S ribosome.

Located at the top of the head of the 30S subunit, it contacts several helices of the 16S rRNA. In the 70S ribosome it contacts the 23S rRNA (bridge B1a) and protein L5 of the 50S subunit (bridge B1b), connecting the 2 subunits; these bridges are implicated in subunit movement. Contacts the tRNAs in the A and P-sites. The chain is Small ribosomal subunit protein uS13 from Synechococcus elongatus (strain ATCC 33912 / PCC 7942 / FACHB-805) (Anacystis nidulans R2).